A 355-amino-acid chain; its full sequence is Probable butyrate kinase (355 aa).

This sequence belongs to the acetokinase family.

It is found in the cytoplasm. It carries out the reaction butanoate + ATP = butanoyl phosphate + ADP. This Listeria monocytogenes serotype 4a (strain HCC23) protein is Probable butyrate kinase.